A 180-amino-acid chain; its full sequence is Small ribosomal subunit protein uS4 (180 aa).

The 63-residue stretch at 103–165 (RRLQTLVYKK…KNSPFAKESH (63 aa)) folds into the S4 RNA-binding domain.

It belongs to the universal ribosomal protein uS4 family. As to quaternary structure, part of the 30S ribosomal subunit. Contacts protein S5. The interaction surface between S4 and S5 is involved in control of translational fidelity.

Its function is as follows. One of the primary rRNA binding proteins, it binds directly to 16S rRNA where it nucleates assembly of the body of the 30S subunit. With S5 and S12 plays an important role in translational accuracy. The protein is Small ribosomal subunit protein uS4 of Thermococcus gammatolerans (strain DSM 15229 / JCM 11827 / EJ3).